Reading from the N-terminus, the 850-residue chain is Transforming growth factor beta receptor type 3 (850 aa).

An N-terminal signal peptide occupies residues 1-22; that stretch reads MAVTSHHMVPVFVLMSACLATA. Residues 23-785 lie on the Extracellular side of the membrane; it reads GPEPSTRCEL…QIFHGLDTLT (763 aa). A disulfide bridge connects residues Cys-54 and Cys-199. N-linked (GlcNAc...) asparagine glycans are attached at residues Asn-143 and Asn-491. Residues 454 to 728 form the ZP domain; it reads KCDNEKMVVA…PKCVTPDDAC (275 aa). A disordered region spans residues 528–557; the sequence is SPGDSSGWPDGYEDLESGDNGFPGDTDEGE. Residues Ser-533 and Ser-544 are each glycosylated (O-linked (Xyl...) (glycosaminoglycan) serine). N-linked (GlcNAc...) asparagine glycosylation is found at Asn-570, Asn-589, and Asn-696. 3 cysteine pairs are disulfide-bonded: Cys-638–Cys-704, Cys-659–Cys-728, and Cys-709–Cys-721. The interaction with TGF-beta ligand stretch occupies residues 735–749; the sequence is MIWTMMQNKKTFTKP. The chain crosses the membrane as a helical span at residues 786 to 808; that stretch reads VMGIAFAAFVIGALLTGALWYIY. At 809–850 the chain is on the cytoplasmic side; it reads SHTGETARRQQVPTSPPASENSSAAHSIGSTQSTPCSSSSTA. The span at 817-833 shows a compositional bias: polar residues; sequence RQQVPTSPPASENSSAA. Residues 817-850 are disordered; it reads RQQVPTSPPASENSSAAHSIGSTQSTPCSSSSTA. Over residues 835 to 850 the composition is skewed to low complexity; that stretch reads SIGSTQSTPCSSSSTA. Position 839 is a phosphothreonine (Thr-839).

As to quaternary structure, forms homodimers and homooligomers. Interacts with DYNLT4. Interacts with integrin ITGA5:ITGB1; this interaction promotes the internalization and trafficking of ITGA5:ITGB1 into endocytic vesicles. Interacts with TGFB1, BMP2, BMP5, BMP7 or GDF5 and inhibin A via the ligand binding domains. Interacts with ALK3/BMPR1A; this interaction results in the cell surface retention of BMPR1A. Interacts with ALK6/BMPR1B; this interaction enhances BMPR1B-mediated stimulation of the BMP signaling pathway. Interacts with the scaffolding protein beta-arrestin2/ARRB2; this interaction mediates internalization of TGFBR3 and thus regulates migration, actin cytoskeleton and activation of CDC42. Post-translationally, extensively modified by glycosaminoglycan groups (GAG). Phosphorylated in the cytoplasmic domain by the type II receptor TGFBR2 at THR-839 to mediate recruitment of ARRB2 and subsequent internalization of TGFBR2 and TGFBR3.

Its subcellular location is the cell membrane. The protein resides in the secreted. It localises to the extracellular space. The protein localises to the extracellular matrix. Its function is as follows. Cell surface receptor that regulates diverse cellular processes including cell proliferation, differentiation, migration, and apoptosis. Initiates BMP, inhibin, and TGF-beta signaling pathways by interacting with different ligands including TGFB1, BMP2, BMP5, BMP7 or GDF5. Alternatively, acts as a cell surface coreceptor for BMP ligands, serving to enhance ligand binding by differentially regulating BMPR1A/ALK3 and BMPR1B/ALK6 receptor trafficking. Promotes epithelial cell adhesion, focal adhesion formation and integrin signaling during epithelial cell spreading on fibronectin. By interacting with the scaffolding protein beta-arrestin2/ARRB2, regulates migration or actin cytoskeleton and promotes the activation of CDC42 as well as the inhibition of NF-kappa-B. In gonadotrope cells, acts as an inhibin A coreceptor and regulates follicle-stimulating hormone (FSH) levels and female fertility. Plays a role in the inhibition of directed and random cell migration in epithelial cells by altering the actin cytoskeletal organization. Participates in epithelial-mesenchymal transformation (EMT) upon binding to BMP2 or TGFB2, by activating the PAR6/SMURF1/RHOA pathway. This is Transforming growth factor beta receptor type 3 (Tgfbr3) from Mus musculus (Mouse).